The sequence spans 533 residues: Probable dolichyl pyrophosphate Man9GlcNAc2 alpha-1,3-glucosyltransferase (533 aa).

Residues Met-1–Ser-20 form a disordered region. 9 consecutive transmembrane segments (helical) span residues Phe-42–Ala-64, Trp-149–Val-169, Trp-184–Gln-204, Val-214–Leu-234, Ile-264–Pro-284, Gly-360–His-380, Leu-422–Asn-442, Val-463–Ile-483, and Phe-491–Tyr-511.

It belongs to the ALG6/ALG8 glucosyltransferase family.

The protein resides in the endoplasmic reticulum membrane. The catalysed reaction is an alpha-D-Man-(1-&gt;2)-alpha-D-Man-(1-&gt;2)-alpha-D-Man-(1-&gt;3)-[alpha-D-Man-(1-&gt;2)-alpha-D-Man-(1-&gt;3)-[alpha-D-Man-(1-&gt;2)-alpha-D-Man-(1-&gt;6)]-alpha-D-Man-(1-&gt;6)]-beta-D-Man-(1-&gt;4)-beta-D-GlcNAc-(1-&gt;4)-alpha-D-GlcNAc-diphospho-di-trans,poly-cis-dolichol + a di-trans,poly-cis-dolichyl beta-D-glucosyl phosphate = an alpha-D-Glc-(1-&gt;3)-alpha-D-Man-(1-&gt;2)-alpha-D-Man-(1-&gt;2)-alpha-D-Man-(1-&gt;3)-[alpha-D-Man-(1-&gt;2)-alpha-D-Man-(1-&gt;3)-[alpha-D-Man-(1-&gt;2)-alpha-D-Man-(1-&gt;6)]-alpha-D-Man-(1-&gt;6)]-beta-D-Man-(1-&gt;4)-beta-D-GlcNAc-(1-&gt;4)-alpha-D-GlcNAc-diphospho-di-trans,poly-cis-dolichol + a di-trans,poly-cis-dolichyl phosphate + H(+). It functions in the pathway protein modification; protein glycosylation. In terms of biological role, adds the first glucose residue to the lipid-linked oligosaccharide precursor for N-linked glycosylation. Transfers glucose from dolichyl phosphate glucose (Dol-P-Glc) onto the lipid-linked oligosaccharide Man(9)GlcNAc(2)-PP-Dol. The sequence is that of Probable dolichyl pyrophosphate Man9GlcNAc2 alpha-1,3-glucosyltransferase from Arabidopsis thaliana (Mouse-ear cress).